Here is a 245-residue protein sequence, read N- to C-terminus: DNA polymerase sliding clamp (245 aa).

It belongs to the PCNA family. In terms of assembly, homotrimer. The subunits circularize to form a toroid; DNA passes through its center. Replication factor C (RFC) is required to load the toroid on the DNA.

Its function is as follows. Sliding clamp subunit that acts as a moving platform for DNA processing. Responsible for tethering the catalytic subunit of DNA polymerase and other proteins to DNA during high-speed replication. The chain is DNA polymerase sliding clamp from Methanococcoides burtonii (strain DSM 6242 / NBRC 107633 / OCM 468 / ACE-M).